A 757-amino-acid chain; its full sequence is 5-methyltetrahydropteroyltriglutamate--homocysteine methyltransferase (757 aa).

Residues 16–19 (RELK) and lysine 112 each bind 5-methyltetrahydropteroyltri-L-glutamate. L-homocysteine-binding positions include 432 to 434 (IGS) and glutamate 485. L-methionine-binding positions include 432–434 (IGS) and glutamate 485. 5-methyltetrahydropteroyltri-L-glutamate contacts are provided by residues 516-517 (RC) and tryptophan 562. Aspartate 600 is an L-homocysteine binding site. An L-methionine-binding site is contributed by aspartate 600. Residue glutamate 606 coordinates 5-methyltetrahydropteroyltri-L-glutamate. Positions 642, 644, and 666 each coordinate Zn(2+). Residue histidine 695 is the Proton donor of the active site. A Zn(2+)-binding site is contributed by cysteine 727.

This sequence belongs to the vitamin-B12 independent methionine synthase family. It depends on Zn(2+) as a cofactor.

The catalysed reaction is 5-methyltetrahydropteroyltri-L-glutamate + L-homocysteine = tetrahydropteroyltri-L-glutamate + L-methionine. It participates in amino-acid biosynthesis; L-methionine biosynthesis via de novo pathway; L-methionine from L-homocysteine (MetE route): step 1/1. Its function is as follows. Catalyzes the transfer of a methyl group from 5-methyltetrahydrofolate to homocysteine resulting in methionine formation. This is 5-methyltetrahydropteroyltriglutamate--homocysteine methyltransferase from Actinobacillus pleuropneumoniae serotype 7 (strain AP76).